We begin with the raw amino-acid sequence, 328 residues long: Phosphate acyltransferase (328 aa).

It belongs to the PlsX family. As to quaternary structure, homodimer. Probably interacts with PlsY.

The protein resides in the cytoplasm. The catalysed reaction is a fatty acyl-[ACP] + phosphate = an acyl phosphate + holo-[ACP]. It functions in the pathway lipid metabolism; phospholipid metabolism. Catalyzes the reversible formation of acyl-phosphate (acyl-PO(4)) from acyl-[acyl-carrier-protein] (acyl-ACP). This enzyme utilizes acyl-ACP as fatty acyl donor, but not acyl-CoA. The polypeptide is Phosphate acyltransferase (Staphylococcus aureus (strain MRSA252)).